The primary structure comprises 134 residues: Small ribosomal subunit protein uS11 (134 aa).

The protein belongs to the universal ribosomal protein uS11 family. Part of the 30S ribosomal subunit. Interacts with proteins S7 and S18. Binds to IF-3.

In terms of biological role, located on the platform of the 30S subunit, it bridges several disparate RNA helices of the 16S rRNA. Forms part of the Shine-Dalgarno cleft in the 70S ribosome. In Leptothrix cholodnii (strain ATCC 51168 / LMG 8142 / SP-6) (Leptothrix discophora (strain SP-6)), this protein is Small ribosomal subunit protein uS11.